The chain runs to 230 residues: tRNA (guanine-N(1)-)-methyltransferase (230 aa).

Residues Gly114 and 138–143 (IGDYVL) each bind S-adenosyl-L-methionine.

The protein belongs to the RNA methyltransferase TrmD family. As to quaternary structure, homodimer.

Its subcellular location is the cytoplasm. The enzyme catalyses guanosine(37) in tRNA + S-adenosyl-L-methionine = N(1)-methylguanosine(37) in tRNA + S-adenosyl-L-homocysteine + H(+). In terms of biological role, specifically methylates guanosine-37 in various tRNAs. The sequence is that of tRNA (guanine-N(1)-)-methyltransferase from Rhodococcus jostii (strain RHA1).